Consider the following 417-residue polypeptide: Serine hydroxymethyltransferase (417 aa).

(6S)-5,6,7,8-tetrahydrofolate-binding positions include leucine 121 and 125–127 (GHL). N6-(pyridoxal phosphate)lysine is present on lysine 229. A (6S)-5,6,7,8-tetrahydrofolate-binding site is contributed by 355–357 (SPF).

It belongs to the SHMT family. As to quaternary structure, homodimer. Pyridoxal 5'-phosphate serves as cofactor.

The protein resides in the cytoplasm. The enzyme catalyses (6R)-5,10-methylene-5,6,7,8-tetrahydrofolate + glycine + H2O = (6S)-5,6,7,8-tetrahydrofolate + L-serine. Its pathway is one-carbon metabolism; tetrahydrofolate interconversion. The protein operates within amino-acid biosynthesis; glycine biosynthesis; glycine from L-serine: step 1/1. Catalyzes the reversible interconversion of serine and glycine with tetrahydrofolate (THF) serving as the one-carbon carrier. This reaction serves as the major source of one-carbon groups required for the biosynthesis of purines, thymidylate, methionine, and other important biomolecules. Also exhibits THF-independent aldolase activity toward beta-hydroxyamino acids, producing glycine and aldehydes, via a retro-aldol mechanism. This is Serine hydroxymethyltransferase from Xylella fastidiosa (strain M23).